The primary structure comprises 512 residues: ATP synthase subunit beta 2 (512 aa).

Residue 174–181 (GGAGVGKT) coordinates ATP. Residues 479–494 (RRKEEAAREADARRDA) are compositionally biased toward basic and acidic residues. The tract at residues 479–512 (RRKEEAAREADARRDAAAGAASGSAGPQGAQHGR) is disordered.

This sequence belongs to the ATPase alpha/beta chains family. F-type ATPases have 2 components, CF(1) - the catalytic core - and CF(0) - the membrane proton channel. CF(1) has five subunits: alpha(3), beta(3), gamma(1), delta(1), epsilon(1). CF(0) has three main subunits: a(1), b(2) and c(9-12). The alpha and beta chains form an alternating ring which encloses part of the gamma chain. CF(1) is attached to CF(0) by a central stalk formed by the gamma and epsilon chains, while a peripheral stalk is formed by the delta and b chains.

The protein localises to the cell inner membrane. It carries out the reaction ATP + H2O + 4 H(+)(in) = ADP + phosphate + 5 H(+)(out). Produces ATP from ADP in the presence of a proton gradient across the membrane. The catalytic sites are hosted primarily by the beta subunits. This Burkholderia thailandensis (strain ATCC 700388 / DSM 13276 / CCUG 48851 / CIP 106301 / E264) protein is ATP synthase subunit beta 2.